Here is a 561-residue protein sequence, read N- to C-terminus: MAAPRESLRRRKAGAGDPEPEAPPGQGRDLKGRPARLRAGTFWLTRIVLLRALAFVYFVAFLVAFHQNKQLIGDRGLLPCRAYLQSVQRHFGGRVSWDALSYAPTILWLLDWSHMDANLDALALLGLGISSFILVSGCANMVLMAALWVLYMSLVNVGQIWYSFGWESQLLETGFLGIFLCPLWTLSALPRGTPTSWVVMWGFRWLIFRIMLGAGLIKIRGDRCWRDLTCMDFHYETQPVPNPVAYFLHRSPWWFHRFETLSNHFLELVVPFFIFLGRRMCIVHGALQVLFQVVLIISGNLSFLNWLTIVPSLACFDDATLGGLFPSGPGRLKDQVLKIQEEETRGARAPRTRGSVARGTVNLALGILVAWLSIPVVLNLLSPRQVMNSSFNPLRIVNTYGAFGSITRERTEVILQGTASANASAPDSAWEDYEFKCKPGDPRRRPCLISPYHHRLDWLMWFAAFQTYEHNEWIIHLAGKLLANDAQALSLLARNPFEGRDPPRWVRGEHYRYKFSRPGGRHAAEGKWWIRRRLGPYFPPLSRQDLRGYFTSRQWPYPEPE.

The tract at residues 1–32 (MAAPRESLRRRKAGAGDPEPEAPPGQGRDLKG) is disordered. The Cytoplasmic portion of the chain corresponds to 1 to 42 (MAAPRESLRRRKAGAGDPEPEAPPGQGRDLKGRPARLRAGTF). A helical membrane pass occupies residues 43-65 (WLTRIVLLRALAFVYFVAFLVAF). Residues 66–120 (HQNKQLIGDRGLLPCRAYLQSVQRHFGGRVSWDALSYAPTILWLLDWSHMDANLD) lie on the Lumenal side of the membrane. The helical transmembrane segment at 121–144 (ALALLGLGISSFILVSGCANMVLM) threads the bilayer. Residues 145 to 200 (AALWVLYMSLVNVGQIWYSFGWESQLLETGFLGIFLCPLWTLSALPRGTPTSWVVM) lie on the Cytoplasmic side of the membrane. Residues 201-214 (WGFRWLIFRIMLGA) form a helical membrane-spanning segment. At 215-285 (GLIKIRGDRC…LGRRMCIVHG (71 aa)) the chain is on the lumenal side. A helical membrane pass occupies residues 286-314 (ALQVLFQVVLIISGNLSFLNWLTIVPSLA). The Cytoplasmic segment spans residues 315-360 (CFDDATLGGLFPSGPGRLKDQVLKIQEEETRGARAPRTRGSVARGT). A helical membrane pass occupies residues 361–382 (VNLALGILVAWLSIPVVLNLLS). The Lumenal segment spans residues 383–561 (PRQVMNSSFN…SRQWPYPEPE (179 aa)).

Belongs to the lipase maturation factor family. Interacts with LPL and SEL1L.

It is found in the endoplasmic reticulum membrane. Involved in the maturation of specific proteins in the endoplasmic reticulum. Required for maturation and transport of active lipoprotein lipase (LPL) through the secretory pathway. Each LMF1 molecule chaperones 50 or more molecules of LPL. This chain is Lipase maturation factor 1 (LMF1), found in Bos taurus (Bovine).